A 486-amino-acid polypeptide reads, in one-letter code: Ribulose bisphosphate carboxylase large chain (486 aa).

Positions 126 and 176 each coordinate substrate. Residue Lys178 is the Proton acceptor of the active site. Lys180 is a substrate binding site. Residues Lys204, Asp206, and Glu207 each coordinate Mg(2+). Lys204 carries the N6-carboxylysine modification. Residue His296 is the Proton acceptor of the active site. 3 residues coordinate substrate: Arg297, His329, and Ser381.

Belongs to the RuBisCO large chain family. Type I subfamily. In terms of assembly, heterohexadecamer of 8 large chains and 8 small chains. Requires Mg(2+) as cofactor.

It catalyses the reaction 2 (2R)-3-phosphoglycerate + 2 H(+) = D-ribulose 1,5-bisphosphate + CO2 + H2O. The catalysed reaction is D-ribulose 1,5-bisphosphate + O2 = 2-phosphoglycolate + (2R)-3-phosphoglycerate + 2 H(+). Its function is as follows. RuBisCO catalyzes two reactions: the carboxylation of D-ribulose 1,5-bisphosphate, the primary event in carbon dioxide fixation, as well as the oxidative fragmentation of the pentose substrate. Both reactions occur simultaneously and in competition at the same active site. The chain is Ribulose bisphosphate carboxylase large chain from Sinorhizobium medicae (strain WSM419) (Ensifer medicae).